We begin with the raw amino-acid sequence, 466 residues long: Asparagine--tRNA ligase (466 aa).

The protein belongs to the class-II aminoacyl-tRNA synthetase family. Homodimer.

Its subcellular location is the cytoplasm. The enzyme catalyses tRNA(Asn) + L-asparagine + ATP = L-asparaginyl-tRNA(Asn) + AMP + diphosphate + H(+). This Shewanella pealeana (strain ATCC 700345 / ANG-SQ1) protein is Asparagine--tRNA ligase.